A 316-amino-acid polypeptide reads, in one-letter code: Biotin synthase (316 aa).

In terms of domain architecture, Radical SAM core spans Tyr38–Arg266. [4Fe-4S] cluster contacts are provided by Cys56, Cys60, and Cys63. [2Fe-2S] cluster is bound by residues Ser100, Cys131, Cys191, and Arg261.

It belongs to the radical SAM superfamily. Biotin synthase family. Homodimer. [4Fe-4S] cluster serves as cofactor. It depends on [2Fe-2S] cluster as a cofactor.

The enzyme catalyses (4R,5S)-dethiobiotin + (sulfur carrier)-SH + 2 reduced [2Fe-2S]-[ferredoxin] + 2 S-adenosyl-L-methionine = (sulfur carrier)-H + biotin + 2 5'-deoxyadenosine + 2 L-methionine + 2 oxidized [2Fe-2S]-[ferredoxin]. The protein operates within cofactor biosynthesis; biotin biosynthesis; biotin from 7,8-diaminononanoate: step 2/2. In terms of biological role, catalyzes the conversion of dethiobiotin (DTB) to biotin by the insertion of a sulfur atom into dethiobiotin via a radical-based mechanism. The sequence is that of Biotin synthase from Thermodesulfovibrio yellowstonii (strain ATCC 51303 / DSM 11347 / YP87).